The primary structure comprises 180 residues: Adenine phosphoribosyltransferase (180 aa).

It belongs to the purine/pyrimidine phosphoribosyltransferase family. Homodimer.

The protein resides in the cytoplasm. The catalysed reaction is AMP + diphosphate = 5-phospho-alpha-D-ribose 1-diphosphate + adenine. It functions in the pathway purine metabolism; AMP biosynthesis via salvage pathway; AMP from adenine: step 1/1. In terms of biological role, catalyzes a salvage reaction resulting in the formation of AMP, that is energically less costly than de novo synthesis. The sequence is that of Adenine phosphoribosyltransferase from Haemophilus influenzae (strain 86-028NP).